The primary structure comprises 494 residues: Beta-glucosidase 29 (494 aa).

A signal peptide spans 1–28 (MAWLGIGMGRQIVPVLVFVAVLCSGVDA). Glutamine 49 is an a beta-D-glucoside binding site. Asparagine 103 carries N-linked (GlcNAc...) asparagine glycosylation. A beta-D-glucoside contacts are provided by residues histidine 138 and 183–184 (NE). Glutamate 184 (proton donor) is an active-site residue. A disulfide bridge connects residues cysteine 203 and cysteine 211. Asparagine 263 carries an N-linked (GlcNAc...) asparagine glycan. Tyrosine 327 contributes to the a beta-D-glucoside binding site. N-linked (GlcNAc...) asparagine glycosylation is present at asparagine 352. Glutamate 398 is an a beta-D-glucoside binding site. Glutamate 398 (nucleophile) is an active-site residue. Asparagine 406 is a glycosylation site (N-linked (GlcNAc...) asparagine). A beta-D-glucoside is bound by residues tryptophan 447, 454-455 (EW), and phenylalanine 463.

This sequence belongs to the glycosyl hydrolase 1 family.

The enzyme catalyses Hydrolysis of terminal, non-reducing beta-D-glucosyl residues with release of beta-D-glucose.. The polypeptide is Beta-glucosidase 29 (BGLU29) (Oryza sativa subsp. japonica (Rice)).